We begin with the raw amino-acid sequence, 479 residues long: Ribosomal RNA small subunit methyltransferase F (479 aa).

S-adenosyl-L-methionine contacts are provided by residues 125–131 (AAAPGSK), glutamate 149, glycine 177, and aspartate 194. The Nucleophile role is filled by cysteine 247.

This sequence belongs to the class I-like SAM-binding methyltransferase superfamily. RsmB/NOP family.

The protein localises to the cytoplasm. It carries out the reaction cytidine(1407) in 16S rRNA + S-adenosyl-L-methionine = 5-methylcytidine(1407) in 16S rRNA + S-adenosyl-L-homocysteine + H(+). In terms of biological role, specifically methylates the cytosine at position 1407 (m5C1407) of 16S rRNA. This Shigella flexneri serotype 5b (strain 8401) protein is Ribosomal RNA small subunit methyltransferase F.